A 487-amino-acid polypeptide reads, in one-letter code: NAD-dependent histone deacetylase HST3 (487 aa).

One can recognise a Deacetylase sirtuin-type domain in the interval 15 to 336 (PADTSIKLHE…FLTQEQLDSE (322 aa)). NAD(+) contacts are provided by residues 40–59 (GAGI…DGLY) and 129–132 (QNID). His167 (proton acceptor) is an active-site residue. Zn(2+) is bound by residues Cys175, Cys178, Cys200, and Cys203. NAD(+)-binding positions include 261-263 (GTS), 291-293 (NKT), and Cys312. Positions 397 to 406 (VESVSVKEEP) are enriched in basic and acidic residues. The tract at residues 397–487 (VESVSVKEEP…ARKGITLDQH (91 aa)) is disordered. Residues 415–425 (HKPKQATKLKR) show a composition bias toward basic residues. Residues 448–459 (DQLSSPASSING) are compositionally biased toward polar residues.

Belongs to the sirtuin family. Class I subfamily. Requires Zn(2+) as cofactor.

The protein localises to the cytoplasm. Its subcellular location is the nucleus. The catalysed reaction is N(6)-acetyl-L-lysyl-[protein] + NAD(+) + H2O = 2''-O-acetyl-ADP-D-ribose + nicotinamide + L-lysyl-[protein]. NAD-dependent histone deacetylase, which could function in telomeric silencing, cell cycle progression and chromosome stability. In Candida albicans (strain SC5314 / ATCC MYA-2876) (Yeast), this protein is NAD-dependent histone deacetylase HST3 (HST3).